The primary structure comprises 289 residues: 3-methyl-2-oxobutanoate hydroxymethyltransferase (289 aa).

Residues 1-10 (MSDSKSSAST) are compositionally biased toward low complexity. The tract at residues 1–33 (MSDSKSSASTSEDRLYGSAPSHDVPKRKTRTHH) is disordered. 2 residues coordinate Mg(2+): D70 and D109. Residues 70–71 (DS), D109, and K139 each bind 3-methyl-2-oxobutanoate. E141 provides a ligand contact to Mg(2+). Catalysis depends on E207, which acts as the Proton acceptor.

This sequence belongs to the PanB family. In terms of assembly, homodecamer; pentamer of dimers. Mg(2+) is required as a cofactor.

It is found in the cytoplasm. The enzyme catalyses 3-methyl-2-oxobutanoate + (6R)-5,10-methylene-5,6,7,8-tetrahydrofolate + H2O = 2-dehydropantoate + (6S)-5,6,7,8-tetrahydrofolate. Its pathway is cofactor biosynthesis; (R)-pantothenate biosynthesis; (R)-pantoate from 3-methyl-2-oxobutanoate: step 1/2. Catalyzes the reversible reaction in which hydroxymethyl group from 5,10-methylenetetrahydrofolate is transferred onto alpha-ketoisovalerate to form ketopantoate. This is 3-methyl-2-oxobutanoate hydroxymethyltransferase from Rhodococcus jostii (strain RHA1).